A 288-amino-acid polypeptide reads, in one-letter code: Disulfide-bond oxidoreductase YghU (288 aa).

Glutathione contacts are provided by residues Asn-26, 52–54 (TPN), Gln-87, Ile-101, 117–118 (ES), Gln-151, and Arg-178. The region spanning 46 to 133 (QLYSLGTPNG…YLAEKFGYFL (88 aa)) is the GST N-terminal domain. A GST C-terminal domain is found at 139–265 (KRTETMNWLF…RIVNRTNGPL (127 aa)). Residues 260 to 288 (RTNGPLNEQLHERHDASDFETNTEDKRQG) form a disordered region. Basic and acidic residues predominate over residues 268–288 (QLHERHDASDFETNTEDKRQG).

The protein belongs to the GST superfamily. Nu-class GSH transferase family. In terms of assembly, homodimer.

Functionally, exhibits a robust glutathione (GSH)-dependent disulfide-bond reductase activity toward the model substrate, 2-hydroxyethyl disulfide; the actual physiological substrates are not known. Also displays a modest GSH-dependent peroxidase activity toward several organic hydroperoxides, such as cumene hydroperoxide and linoleic acid 13(S)-hydroperoxide, but does not reduce H(2)O(2) or tert-butyl hydroperoxide at appreciable rates. Exhibits little or no GSH transferase activity with most typical electrophilic substrates, and has no detectable transferase activity toward 1-chloro-2,4-dinitrobenzene (CDNB) with glutathionylspermidine (GspSH) as the nucleophilic substrate. The sequence is that of Disulfide-bond oxidoreductase YghU (yghU) from Escherichia coli (strain K12).